We begin with the raw amino-acid sequence, 274 residues long: 2,3,4,5-tetrahydropyridine-2,6-dicarboxylate N-succinyltransferase (274 aa).

Residues Arg-105 and Asp-142 each coordinate substrate.

It belongs to the transferase hexapeptide repeat family. Homotrimer.

The protein localises to the cytoplasm. The enzyme catalyses (S)-2,3,4,5-tetrahydrodipicolinate + succinyl-CoA + H2O = (S)-2-succinylamino-6-oxoheptanedioate + CoA. It participates in amino-acid biosynthesis; L-lysine biosynthesis via DAP pathway; LL-2,6-diaminopimelate from (S)-tetrahydrodipicolinate (succinylase route): step 1/3. In Thiobacillus denitrificans (strain ATCC 25259 / T1), this protein is 2,3,4,5-tetrahydropyridine-2,6-dicarboxylate N-succinyltransferase.